The chain runs to 357 residues: DNA integrity scanning protein DisA (357 aa).

Positions 3 to 141 (RPTLRETVAR…GGERHVVADS (139 aa)) constitute a DAC domain. ATP is bound by residues glycine 70, leucine 88, and 101 to 105 (TRHRS).

This sequence belongs to the DisA family. In terms of assembly, homooctamer. Requires Mg(2+) as cofactor.

The catalysed reaction is 2 ATP = 3',3'-c-di-AMP + 2 diphosphate. Functionally, participates in a DNA-damage check-point. DisA forms globular foci that rapidly scan along the chromosomes searching for lesions. In terms of biological role, also has diadenylate cyclase activity, catalyzing the condensation of 2 ATP molecules into cyclic di-AMP (c-di-AMP). c-di-AMP likely acts as a signaling molecule that may couple DNA integrity with a cellular process. The protein is DNA integrity scanning protein DisA of Mycolicibacterium paratuberculosis (strain ATCC BAA-968 / K-10) (Mycobacterium paratuberculosis).